Here is a 437-residue protein sequence, read N- to C-terminus: Succinate--CoA ligase [ADP-forming] subunit beta, hydrogenosomal (437 aa).

Residues 1–27 (MLANVTRSTSKAAPALASIAQTAQKRF) constitute a hydrogenosome transit peptide. The region spanning 36-278 (MNLLHEYNVN…TTQEDPREVA (243 aa)) is the ATP-grasp domain. ATP is bound by residues K73, 80 to 82 (GRG), and E141. Mg(2+)-binding residues include N233 and D247. Residues N299 and 356-358 (GIM) each bind substrate.

The protein belongs to the succinate/malate CoA ligase beta subunit family. In terms of assembly, heterodimer of an alpha and a beta subunit. Mg(2+) serves as cofactor.

The protein localises to the hydrogenosome. The catalysed reaction is succinate + ATP + CoA = succinyl-CoA + ADP + phosphate. It participates in carbohydrate metabolism; tricarboxylic acid cycle; succinate from succinyl-CoA (ligase route): step 1/1. Functionally, succinyl-CoA synthetase functions in the citric acid cycle (TCA), coupling the hydrolysis of succinyl-CoA to the synthesis of ATP and thus represents the only step of substrate-level phosphorylation in the TCA. The beta subunit provides nucleotide specificity of the enzyme and binds the substrate succinate, while the binding sites for coenzyme A and phosphate are found in the alpha subunit. In Neocallimastix frontalis (Rumen fungus), this protein is Succinate--CoA ligase [ADP-forming] subunit beta, hydrogenosomal.